A 101-amino-acid chain; its full sequence is uncharacterized protein (101 aa).

This is an uncharacterized protein from Encephalitozoon cuniculi (strain GB-M1) (Microsporidian parasite).